A 259-amino-acid polypeptide reads, in one-letter code: Peptide methionine sulfoxide reductase (259 aa).

The interval 66–90 (TRTPADASMDQSSIAQGPDDDIPAP) is disordered.

Belongs to the MsrA Met sulfoxide reductase family.

The catalysed reaction is L-methionyl-[protein] + [thioredoxin]-disulfide + H2O = L-methionyl-(S)-S-oxide-[protein] + [thioredoxin]-dithiol. It catalyses the reaction [thioredoxin]-disulfide + L-methionine + H2O = L-methionine (S)-S-oxide + [thioredoxin]-dithiol. In terms of biological role, has an important function as a repair enzyme for proteins that have been inactivated by oxidation. Catalyzes the reversible oxidation-reduction of methionine sulfoxide in proteins to methionine. This Lactuca sativa (Garden lettuce) protein is Peptide methionine sulfoxide reductase.